The chain runs to 431 residues: Levansucrase LscB (431 aa).

The sucrose site is built by tryptophan 61, aspartate 62, alanine 148, arginine 218, and aspartate 219. The active-site Nucleophile is aspartate 62. Catalysis depends on glutamate 303, which acts as the Proton donor/acceptor.

This sequence belongs to the glycosyl hydrolase 68 family.

The protein resides in the secreted. It catalyses the reaction [6)-beta-D-fructofuranosyl-(2-&gt;](n) alpha-D-glucopyranoside + sucrose = [6)-beta-D-fructofuranosyl-(2-&gt;](n+1) alpha-D-glucopyranoside + D-glucose. Its function is as follows. Catalyzes the synthesis of levan, a fructose polymer, by transferring the fructosyl moiety from sucrose to a growing acceptor molecule. The protein is Levansucrase LscB of Pseudomonas savastanoi pv. glycinea (Pseudomonas syringae pv. glycinea).